Consider the following 430-residue polypeptide: Mannan endo-1,4-beta-mannosidase (430 aa).

The Proton donor role is filled by Glu-173. Glu-269 serves as the catalytic Nucleophile. CBM10 domains lie at 357-390 and 395-424; these read SCGT…CVVA and SCNW…CIAA.

Belongs to the glycosyl hydrolase 5 (cellulase A) family.

It carries out the reaction Random hydrolysis of (1-&gt;4)-beta-D-mannosidic linkages in mannans, galactomannans and glucomannans.. In terms of biological role, catalyzes the endo hydrolysis of beta-1,4-linked mannan, galactomannan and glucomannan. It is able to hydrolyze mannosidic linkages that are flanked by mannose or glucose. This chain is Mannan endo-1,4-beta-mannosidase, found in Cellvibrio japonicus (strain Ueda107) (Pseudomonas fluorescens subsp. cellulosa).